Consider the following 505-residue polypeptide: MTEQKYIVALDQGTTSSRAVILDHDANIVSVAQREFTQIYPEAGWVEHDPMEIWATQSSTLVEALAKTGIRSDQLAGIGITNQRETTIVWNKETGKPVYNAIVWQCRRTADICEELKARGLEDYVRDNTGLVLDPYFSGTKVKWILDNVEGAREDAEAGKLLFGTVDTWLVWKMTQGRVHVTDYTNASRTMLFNINDLCWDQKMLDEMGIPASMMPEVKRSSEIYGQTNIGGKGGTRIPIAGIAGDQQAALYGQMCVEAGQAKNTYGTGCFLLMNTGQEKVTSKNGLLTTLACGPKGEPAYALEGAVFMGGASIQWLRDEMKILAGAEDSEYFATKVDTSNGVYVVPAFTGLGAPYWDAYARGTIVGLTRGVNSNHIIRATLEGIAYQTRDVLDAMQADSGIKLANLRVDGGAVANNFLMQFQSDVLNTEVHRPQVTEVTALGAAYLAGLAVGFWNSIDELQDKAVLDRTFEPHDDEEKRNRRYKGWKRAVKCAQTWSELHDEDD.

T14 lines the ADP pocket. ATP contacts are provided by T14, T15, and S16. T14 contributes to the sn-glycerol 3-phosphate binding site. R18 contacts ADP. Sn-glycerol 3-phosphate is bound by residues R84, E85, Y136, and D246. Residues R84, E85, Y136, D246, and Q247 each contribute to the glycerol site. Residues T268 and G311 each contribute to the ADP site. ATP-binding residues include T268, G311, Q315, and G412. G412 and N416 together coordinate ADP.

It belongs to the FGGY kinase family.

It catalyses the reaction glycerol + ATP = sn-glycerol 3-phosphate + ADP + H(+). Its pathway is polyol metabolism; glycerol degradation via glycerol kinase pathway; sn-glycerol 3-phosphate from glycerol: step 1/1. With respect to regulation, inhibited by fructose 1,6-bisphosphate (FBP). Functionally, key enzyme in the regulation of glycerol uptake and metabolism. Catalyzes the phosphorylation of glycerol to yield sn-glycerol 3-phosphate. This Vibrio campbellii (strain ATCC BAA-1116) protein is Glycerol kinase.